The chain runs to 207 residues: LexA repressor (207 aa).

Residues 28–48 constitute a DNA-binding region (H-T-H motif); sequence VREIGEAVGLASSSTVHGHLS. Active-site for autocatalytic cleavage activity residues include S129 and K167.

The protein belongs to the peptidase S24 family. In terms of assembly, homodimer.

The enzyme catalyses Hydrolysis of Ala-|-Gly bond in repressor LexA.. Functionally, represses a number of genes involved in the response to DNA damage (SOS response), including recA and lexA. In the presence of single-stranded DNA, RecA interacts with LexA causing an autocatalytic cleavage which disrupts the DNA-binding part of LexA, leading to derepression of the SOS regulon and eventually DNA repair. The sequence is that of LexA repressor from Halalkalibacterium halodurans (strain ATCC BAA-125 / DSM 18197 / FERM 7344 / JCM 9153 / C-125) (Bacillus halodurans).